Consider the following 279-residue polypeptide: Putative pyruvate, phosphate dikinase regulatory protein (279 aa).

157–164 (GVSRTSKT) serves as a coordination point for ADP.

This sequence belongs to the pyruvate, phosphate/water dikinase regulatory protein family. PDRP subfamily.

The catalysed reaction is N(tele)-phospho-L-histidyl/L-threonyl-[pyruvate, phosphate dikinase] + ADP = N(tele)-phospho-L-histidyl/O-phospho-L-threonyl-[pyruvate, phosphate dikinase] + AMP + H(+). It catalyses the reaction N(tele)-phospho-L-histidyl/O-phospho-L-threonyl-[pyruvate, phosphate dikinase] + phosphate + H(+) = N(tele)-phospho-L-histidyl/L-threonyl-[pyruvate, phosphate dikinase] + diphosphate. Its function is as follows. Bifunctional serine/threonine kinase and phosphorylase involved in the regulation of the pyruvate, phosphate dikinase (PPDK) by catalyzing its phosphorylation/dephosphorylation. The chain is Putative pyruvate, phosphate dikinase regulatory protein from Lactobacillus helveticus (strain DPC 4571).